The chain runs to 220 residues: uncharacterized protein (220 aa).

This is an uncharacterized protein from Borreliella burgdorferi (strain ATCC 35210 / DSM 4680 / CIP 102532 / B31) (Borrelia burgdorferi).